Consider the following 442-residue polypeptide: Syndecan-3 (442 aa).

2 disordered regions span residues 1-24 and 57-87; these read MKPGPPHRAGAAHGAGAGAGAAAG and RPVDLEGSGDDDSFPDDELDDLYSGSGSGYF. The Extracellular portion of the chain corresponds to 1–387; sequence MKPGPPHRAG…SILERKEVLV (387 aa). Over residues 13-24 the composition is skewed to gly residues; it reads HGAGAGAGAAAG. Residues 63–77 show a composition bias toward acidic residues; it reads GSGDDDSFPDDELDD. 4 O-linked (Xyl...) (glycosaminoglycan) serine glycosylation sites follow: S80, S82, S84, and S91. O-linked (GalNAc) serine; by GALNT13 glycosylation occurs at S108. O-linked (GalNAc) threonine; by GALNT13 glycans are attached at residues T109 and T110. Disordered stretches follow at residues 150–173, 225–326, and 340–367; these read EEPSQRATTVSTTMATTAATSTGD, TTPE…ETTQ, and AAKASSPPGTLPKGARPGPGLLDNAIDS. Composition is skewed to low complexity over residues 156–173, 225–238, and 275–286; these read ATTVSTTMATTAATSTGD, TTPEAPSPPTTAAV, and TLPLGTTAPGPT. An O-linked (GalNAc) serine; by GALNT13 glycan is attached at S160. O-linked (GalNAc) threonine; by GALNT13 glycosylation is found at T161, T162, and T169. S170 carries an O-linked (GalNAc) serine; by GALNT13 glycan. O-linked (GalNAc) threonine; by GALNT13 glycosylation is present at T171. The span at 288-299 shows a compositional bias: polar residues; that stretch reads VAQTPTPETFLT. Residues S314 and S367 are each glycosylated (O-linked (Xyl...) (glycosaminoglycan) serine). A helical membrane pass occupies residues 388–408; it reads AVIVGGVVGALFAAFLVTLLI. Y409, Y419, Y431, and Y441 each carry phosphotyrosine. The Cytoplasmic segment spans residues 409–442; sequence YRMKKKDEGSYTLEEPKQASVTYQKPDKQEEFYA. The disordered stretch occupies residues 419–442; that stretch reads YTLEEPKQASVTYQKPDKQEEFYA. A compositionally biased stretch (basic and acidic residues) spans 433–442; sequence KPDKQEEFYA.

This sequence belongs to the syndecan proteoglycan family. As to quaternary structure, interacts with TIAM1. Interacts with PTN (via heparan sulfate chains); this interaction mediates the neurite outgrowth-promoting signal from PTN to the cytoskeleton of growing neurites; this interaction mediates osteoblast recruitment. Interacts with MDK; this interaction induces SDC3 clustering; this interaction induces neuronal cell adhesion and neurite outgrowth. In terms of processing, O-glycosylated within the Thr/Ser-rich region which could interact with lectin domains on other molecules. As to expression, expressed in the nervous system, the adrenal gland, and the spleen.

It is found in the cell membrane. Its function is as follows. Cell surface proteoglycan that may bear heparan sulfate. May have a role in the organization of cell shape by affecting the actin cytoskeleton, possibly by transferring signals from the cell surface in a sugar-dependent mechanism. In Homo sapiens (Human), this protein is Syndecan-3 (SDC3).